Here is a 339-residue protein sequence, read N- to C-terminus: Transmembrane protein 120B (339 aa).

Residues 1–77 adopt a coiled-coil conformation; sequence MSGQLERCER…ASREEAELVQ (77 aa). 6 helical membrane passes run 102 to 124, 132 to 152, 159 to 179, 187 to 207, 270 to 290, and 302 to 322; these read GLYLNLVLGNVNVTLLSNQAKFA, FKLYLTIILLLGAVACRFVLH, VFNFLLVWYYCTLTIRESILI, GWWVSHHYVSTFLSGVMLTWP, FLLPFLFCGHFWQLYNAVTLF, and QVFVLAFTFLILFLGNFLTTL.

It belongs to the TMEM120 family. Heterooligomer with TMEM120A.

It is found in the nucleus inner membrane. Necessary for efficient adipogenesis. Does not show ion channel activity. The sequence is that of Transmembrane protein 120B from Homo sapiens (Human).